We begin with the raw amino-acid sequence, 466 residues long: Peptidoglycan-N-acetylglucosamine deacetylase PgdA (466 aa).

At 1 to 5 (MKIRW) the chain is on the cytoplasmic side. Residues 6–26 (IRLSLVAILIIAVVFIGVIGF) form a helical membrane-spanning segment. The Extracellular portion of the chain corresponds to 27–466 (QKYQFSKSRN…FDKTDSRMVK (440 aa)). The NodB homology domain occupies 266–440 (KRIALTFDDG…KLKSQGYEFV (175 aa)). Asp273 serves as the catalytic Proton acceptor. Positions 274, 324, and 328 each coordinate Zn(2+). Tyr365 provides a ligand contact to substrate. His415 functions as the Proton donor in the catalytic mechanism.

In terms of assembly, homodimer. Interacts (via transmembrane domain) with PbpA1 (via transmembrane domain); the interaction is important for the peptidoglycan N-deacetylase function of this protein. Requires Zn(2+) as cofactor.

Its subcellular location is the cell membrane. The protein resides in the secreted. It localises to the cell wall. It carries out the reaction peptidoglycan-N-acetyl-D-glucosamine + H2O = peptidoglycan-D-glucosamine + acetate.. Catalyzes the deacetylation of N-acetylglucosamine (GlcNAc) residues in peptidoglycan (PG). Also deacetylates N-acetylated PG. Does not deacetylate N-acetylmuramic acid. Confers host lysozyme resistance. Critical for virulence and escape from innate immune response of the host. Required for intracellular survival of bacteria in macrophages of the host. Required for successful host colonization. Controls the production of inflammatory mediators in the bone marrow derived macrophages (BMMs) of the infected mouse. Suppresses Toll-like receptor 2 (TLR2)-dependent secretion of interleukin 6 (IL-6) and interferon-beta (IFN-beta) in the macrophages of the infected mouse. May decrease accessibility of pattern recognition receptors (PRRs) such as nucleotide-binding oligomerization domain protein (NOD) 1 of the host to the bacterial cell wall components. Protects cells from autolysis induced by lysozyme or by other autolysis-inducing agents. This chain is Peptidoglycan-N-acetylglucosamine deacetylase PgdA, found in Listeria monocytogenes serotype 1/2a (strain 10403S).